The following is a 228-amino-acid chain: Rab-like protein 2B (228 aa).

Residues 28–35 (GDSAVGKS), 76–80 (DTAGQ), and 133–136 (NKID) each bind GTP. The disordered stretch occupies residues 200-228 (LEQEEEDVPDQEQSSSIETPSEEAASPHS).

It belongs to the small GTPase superfamily. Rab family. As to quaternary structure, interacts (in its GTP-bound form) with CEP19 (via residues 121-150); this interaction is required for its localization to the mother centriole and cilium basal body. Interacts (in its GTP-bound form) with the intraflagellar transport (IFT) complex B (via the IFT74-IFT81 heterodimer). Binding to CEP19 and the IFT74-IFT81 heterodimer is mutually exclusive. As to expression, expressed in the testis.

The protein localises to the cytoplasm. The protein resides in the cytoskeleton. It localises to the microtubule organizing center. Its subcellular location is the centrosome. It is found in the centriole. The protein localises to the cilium basal body. Its function is as follows. Small GTPase required for ciliation. Activated in a guanine nucleotide exchange factor (GEF)-independent manner via its intrinsic GDP for GTP nucleotide exchange ability. Involved in ciliary assembly by binding the intraflagellar transport (IFT) complex B from the large pool pre-docked at the base of the cilium and thus triggers its entry into the cilia. The protein is Rab-like protein 2B (RABL2B) of Homo sapiens (Human).